Reading from the N-terminus, the 542-residue chain is N-substituted formamide deformylase (542 aa).

Residues 1-2 constitute a propeptide that is removed on maturation; sequence MT.

In terms of assembly, homodimer. Zn(2+) serves as cofactor.

The catalysed reaction is N-benzylformamide + H2O = benzylamine + formate. With respect to regulation, completely inhibited by HgCl(2), CuCl, CuCl(2) and AgNO(3). Partially inhibited by ZnCl(2) and SnCl(2). Almost completely inhibited by the reducing reagent DTT. Partially inhibited by phenylhydrazine. Moderately inhibited by phenanthroline and 8-hydroxyquinoline. Completely inhibited by the thiol-specific inhibitors N-ethylmaleimide and p-chloromercuribenzoate. Not inhibited by the carbonyl-specific inhibitors aminoguanidine and semicarbazide, the chelating agents alpha,alpha'-dipyridyl, KCN, diethyldithiocarbamate and EDTA, or the oxidizing reagents and serine-modifying reagents such as H(2)O(2), ammonium persulfate, phenylmethanesulfonyl fluoride and diisopropyl fluorophosphates. Hydrolyzes N-substituted formamides, but not amides. N-benzylformamide is the preferred substrate, while N-butylformamide is hydrolyzed at a much lower rate. Has very low activity towards allylformamide, N-(2-cyclohex-1-enylethyl)formamide and N-(alpha-methylbenzyl)formamide. In Arthrobacter pascens, this protein is N-substituted formamide deformylase.